The sequence spans 177 residues: Large ribosomal subunit protein uL6 (177 aa).

The interval 151-177 is disordered; that stretch reads KRPPEPYKGKGVKYADEHIRRKEGKKS. Positions 152–177 are enriched in basic and acidic residues; sequence RPPEPYKGKGVKYADEHIRRKEGKKS.

It belongs to the universal ribosomal protein uL6 family. In terms of assembly, part of the 50S ribosomal subunit.

In terms of biological role, this protein binds to the 23S rRNA, and is important in its secondary structure. It is located near the subunit interface in the base of the L7/L12 stalk, and near the tRNA binding site of the peptidyltransferase center. The polypeptide is Large ribosomal subunit protein uL6 (Fusobacterium nucleatum subsp. nucleatum (strain ATCC 25586 / DSM 15643 / BCRC 10681 / CIP 101130 / JCM 8532 / KCTC 2640 / LMG 13131 / VPI 4355)).